Here is a 121-residue protein sequence, read N- to C-terminus: Large ribosomal subunit protein bL12 (121 aa).

It belongs to the bacterial ribosomal protein bL12 family. In terms of assembly, homodimer. Part of the ribosomal stalk of the 50S ribosomal subunit. Forms a multimeric L10(L12)X complex, where L10 forms an elongated spine to which 2 to 4 L12 dimers bind in a sequential fashion. Binds GTP-bound translation factors.

In terms of biological role, forms part of the ribosomal stalk which helps the ribosome interact with GTP-bound translation factors. Is thus essential for accurate translation. This chain is Large ribosomal subunit protein bL12, found in Shigella sonnei (strain Ss046).